We begin with the raw amino-acid sequence, 724 residues long: NAD(+) hydrolase SARM1 (724 aa).

The N-terminal 27 residues, 1-27, are a transit peptide targeting the mitochondrion; sequence MVLTLLFSAYKLCRFFTMSGPRPGADR. Positions 24–56 are disordered; sequence GADRLTVPGPDRSGGASPWWAAGGRGSREVSPG. Over residues 36–45 the composition is skewed to low complexity; the sequence is SGGASPWWAA. The ARM 1 repeat unit spans residues 60-100; sequence EVQGALERSLPELQQALSELKQASAARAVGAGLAEVFQLVE. Residues tryptophan 103, arginine 110, 149–157, and 190–193 contribute to the NAD(+) site; these read EQILVAENR and HMFK. 7 ARM repeats span residues 114–153, 155–193, 196–235, 237–280, 281–314, 315–354, and 359–402; these read QGLC…QILV, ENRD…HMFK, EETC…NCAL, GGQT…LATN, KEVE…CLVD, ASDT…AEAA, and QGKT…EEVP. SAM domains are found at residues 412–476 and 486–548; these read WKEA…LKTF and NLAD…MLHS. Serine 548 and serine 558 each carry phosphoserine. A TIR domain is found at 560 to 703; it reads DTPDVFISYR…KIIRFLQGRP (144 aa). NAD(+) contacts are provided by residues 569-570 and glutamate 599; that span reads RR. Glutamate 642 is an active-site residue. Over residues 703 to 716 the composition is skewed to polar residues; that stretch reads PSQDSSAGSDTSLE. The interval 703-724 is disordered; it reads PSQDSSAGSDTSLEGATPMGLP.

The protein belongs to the SARM1 family. As to quaternary structure, homooctamer; forms an octameric ring via SAM domains. Interacts with TICAM1/TRIF and thereby interferes with TICAM1/TRIF function. Interacts with SDC2 (via cytoplasmic domain) and MAPK10/JNK3. Post-translationally, phosphorylation at Ser-548 by JNK kinases (MAPK8, MAPK9 and /or MAPK10) enhance the NAD(+) hydrolase (NADase) activity. Phosphorylation at Ser-548 and subsequent activation takes place in response to oxidative stress conditions and inhibits mitochondrial respiration. In terms of tissue distribution, widely expressed in the brain and neurons (at protein level). Expressed in photoreceptor cells of the neural retina.

It is found in the cytoplasm. The protein localises to the cell projection. The protein resides in the axon. Its subcellular location is the dendrite. It localises to the synapse. It is found in the mitochondrion. The catalysed reaction is NAD(+) + H2O = ADP-D-ribose + nicotinamide + H(+). It catalyses the reaction NAD(+) = cyclic ADP-beta-D-ribose + nicotinamide + H(+). The enzyme catalyses NADP(+) + H2O = ADP-D-ribose 2'-phosphate + nicotinamide + H(+). With respect to regulation, autoinhibited: in the inactive state, the enzymatic TIR domain is held apart by the autoinhibiting ARM repeats. NAD(+)-binding to ARM repeats maintains an inactive state by promoting interaction between ARM repeats and the TIR domain, thereby facilitating inhibition of the enzymatic TIR domain. Following activation, possibly by nicotinamide mononucleotide (NMN), auto-inhibitory interactions are released, allowing self-association of the TIR domains and subsequent activation of the NAD(+) hydrolase (NADase) activity. Self-association of TIR domains is facilitated by the octamer of SAM domains. NAD(+) hydrolase, which plays a key role in axonal degeneration following injury by regulating NAD(+) metabolism. Acts as a negative regulator of MYD88- and TRIF-dependent toll-like receptor signaling pathway by promoting Wallerian degeneration, an injury-induced form of programmed subcellular death which involves degeneration of an axon distal to the injury site. Wallerian degeneration is triggered by NAD(+) depletion: in response to injury, SARM1 is activated and catalyzes cleavage of NAD(+) into ADP-D-ribose (ADPR), cyclic ADPR (cADPR) and nicotinamide; NAD(+) cleavage promoting cytoskeletal degradation and axon destruction. Also able to hydrolyze NADP(+), but not other NAD(+)-related molecules. Can activate neuronal cell death in response to stress. Regulates dendritic arborization through the MAPK4-JNK pathway. Involved in innate immune response: inhibits both TICAM1/TRIF- and MYD88-dependent activation of JUN/AP-1, TRIF-dependent activation of NF-kappa-B and IRF3, and the phosphorylation of MAPK14/p38. This chain is NAD(+) hydrolase SARM1, found in Mus musculus (Mouse).